The primary structure comprises 442 residues: Transforming growth factor beta-2 proprotein (442 aa).

An N-terminal signal peptide occupies residues 1–20 (MHYCVLRTFLLLHLVPVALS). 3 N-linked (GlcNAc...) asparagine glycosylation sites follow: N72, N168, and N269. Cystine bridges form between C337/C346, C345/C408, C374/C439, and C378/C441.

The protein belongs to the TGF-beta family. Interacts with the serine proteases, HTRA1 and HTRA3. Interacts with ASPN. Interacts with MFAP5. As to quaternary structure, interacts with Transforming growth factor beta-2 (TGF-beta-2) chain; interaction is non-covalent and maintains (TGF-beta-2) in a latent state. Interacts with LRRC32/GARP; leading to regulate activation of TGF-beta-2. Interacts with NREP; the interaction results in a decrease in TGFB2 autoinduction. In terms of assembly, transforming growth factor beta-2: Homodimer; disulfide-linked. Transforming growth factor beta-2: Interacts with TGF-beta receptors (TGFBR1 and TGFBR2), leading to signal transduction. Post-translationally, the precursor proprotein is cleaved in the Golgi apparatus to form Transforming growth factor beta-2 (TGF-beta-2) and Latency-associated peptide (LAP) chains, which remain non-covalently linked, rendering TGF-beta-2 inactive. Expressed in cardiomyocytes. As to expression, expressed in the aorta, primary bronchus, uterus, heart, skeletal muscle, sciatic nerve and spinal cord but not in the intestine.

It localises to the secreted. Its subcellular location is the extracellular space. It is found in the extracellular matrix. Functionally, precursor of the Latency-associated peptide (LAP) and Transforming growth factor beta-2 (TGF-beta-2) chains, which constitute the regulatory and active subunit of TGF-beta-2, respectively. Required to maintain the Transforming growth factor beta-2 (TGF-beta-2) chain in a latent state during storage in extracellular matrix. Associates non-covalently with TGF-beta-2 and regulates its activation via interaction with 'milieu molecules', such as LTBP1 and LRRC32/GARP, that control activation of TGF-beta-2. Its function is as follows. Multifunctional protein that regulates various processes such as angiogenesis and heart development. Activation into mature form follows different steps: following cleavage of the proprotein in the Golgi apparatus, Latency-associated peptide (LAP) and Transforming growth factor beta-2 (TGF-beta-2) chains remain non-covalently linked rendering TGF-beta-2 inactive during storage in extracellular matrix. At the same time, LAP chain interacts with 'milieu molecules', such as LTBP1 and LRRC32/GARP, that control activation of TGF-beta-2 and maintain it in a latent state during storage in extracellular milieus. Once activated following release of LAP, TGF-beta-2 acts by binding to TGF-beta receptors (TGFBR1 and TGFBR2), which transduce signal. This chain is Transforming growth factor beta-2 proprotein (Tgfb2), found in Rattus norvegicus (Rat).